A 243-amino-acid chain; its full sequence is Pyridoxine 5'-phosphate synthase (243 aa).

3-amino-2-oxopropyl phosphate is bound at residue Asn9. 11–12 provides a ligand contact to 1-deoxy-D-xylulose 5-phosphate; the sequence is DH. Arg20 is a 3-amino-2-oxopropyl phosphate binding site. Catalysis depends on His45, which acts as the Proton acceptor. 1-deoxy-D-xylulose 5-phosphate is bound by residues Arg47 and His52. Glu72 (proton acceptor) is an active-site residue. Thr102 contributes to the 1-deoxy-D-xylulose 5-phosphate binding site. The Proton donor role is filled by His193. Residues Gly194 and 215–216 contribute to the 3-amino-2-oxopropyl phosphate site; that span reads GH.

Belongs to the PNP synthase family. In terms of assembly, homooctamer; tetramer of dimers.

It is found in the cytoplasm. The enzyme catalyses 3-amino-2-oxopropyl phosphate + 1-deoxy-D-xylulose 5-phosphate = pyridoxine 5'-phosphate + phosphate + 2 H2O + H(+). It participates in cofactor biosynthesis; pyridoxine 5'-phosphate biosynthesis; pyridoxine 5'-phosphate from D-erythrose 4-phosphate: step 5/5. Catalyzes the complicated ring closure reaction between the two acyclic compounds 1-deoxy-D-xylulose-5-phosphate (DXP) and 3-amino-2-oxopropyl phosphate (1-amino-acetone-3-phosphate or AAP) to form pyridoxine 5'-phosphate (PNP) and inorganic phosphate. In Photorhabdus laumondii subsp. laumondii (strain DSM 15139 / CIP 105565 / TT01) (Photorhabdus luminescens subsp. laumondii), this protein is Pyridoxine 5'-phosphate synthase.